The following is a 208-amino-acid chain: Protein-L-isoaspartate O-methyltransferase (208 aa).

The active site involves Ser59.

Belongs to the methyltransferase superfamily. L-isoaspartyl/D-aspartyl protein methyltransferase family.

Its subcellular location is the cytoplasm. The enzyme catalyses [protein]-L-isoaspartate + S-adenosyl-L-methionine = [protein]-L-isoaspartate alpha-methyl ester + S-adenosyl-L-homocysteine. Functionally, catalyzes the methyl esterification of L-isoaspartyl residues in peptides and proteins that result from spontaneous decomposition of normal L-aspartyl and L-asparaginyl residues. It plays a role in the repair and/or degradation of damaged proteins. The sequence is that of Protein-L-isoaspartate O-methyltransferase from Aliivibrio fischeri (strain MJ11) (Vibrio fischeri).